The sequence spans 152 residues: Xanthine-guanine phosphoribosyltransferase (152 aa).

5-phospho-alpha-D-ribose 1-diphosphate contacts are provided by residues 37–38 (RG), arginine 69, and 88–96 (DDLVDTGGT). GMP is bound at residue arginine 69. Aspartate 89 contacts Mg(2+). Residues aspartate 92 and isoleucine 135 each coordinate guanine. Residues aspartate 92 and isoleucine 135 each coordinate xanthine. Residues 92 to 96 (DTGGT) and 134 to 135 (WI) contribute to the GMP site.

Belongs to the purine/pyrimidine phosphoribosyltransferase family. XGPT subfamily. As to quaternary structure, homotetramer. Requires Mg(2+) as cofactor.

Its subcellular location is the cell inner membrane. The enzyme catalyses GMP + diphosphate = guanine + 5-phospho-alpha-D-ribose 1-diphosphate. The catalysed reaction is XMP + diphosphate = xanthine + 5-phospho-alpha-D-ribose 1-diphosphate. It carries out the reaction IMP + diphosphate = hypoxanthine + 5-phospho-alpha-D-ribose 1-diphosphate. The protein operates within purine metabolism; GMP biosynthesis via salvage pathway; GMP from guanine: step 1/1. It participates in purine metabolism; XMP biosynthesis via salvage pathway; XMP from xanthine: step 1/1. In terms of biological role, purine salvage pathway enzyme that catalyzes the transfer of the ribosyl-5-phosphate group from 5-phospho-alpha-D-ribose 1-diphosphate (PRPP) to the N9 position of the 6-oxopurines guanine and xanthine to form the corresponding ribonucleotides GMP (guanosine 5'-monophosphate) and XMP (xanthosine 5'-monophosphate), with the release of PPi. To a lesser extent, also acts on hypoxanthine. This Enterobacter sp. (strain 638) protein is Xanthine-guanine phosphoribosyltransferase.